We begin with the raw amino-acid sequence, 479 residues long: B-cell CLL/lymphoma 6 member B protein (479 aa).

The region spanning 38 to 105 is the BTB domain; it reads TDVTLLVGGQ…MYTSRLRLSP (68 aa). 2 disordered regions span residues 143–190 and 210–259; these read RPLE…PDPK and GSLV…LSPT. A compositionally biased stretch (pro residues) spans 147–160; that stretch reads AEPPTPPTAPPPGS. Residues 162-172 show a composition bias toward basic and acidic residues; that stretch reads RRSEGHPDPPT. The span at 234–244 shows a compositional bias: low complexity; that stretch reads SSSSSSSSSSS. C2H2-type zinc fingers lie at residues 328 to 350, 356 to 378, 384 to 406, 412 to 434, and 440 to 463; these read YKCQ…RTVH, YHCS…SRIH, YKCE…VLIH, YPCP…VRIH, and YHCD…RQKH.

As to quaternary structure, associates with BCL6 through the BTB domain. In terms of tissue distribution, ubiquitously expressed with higher expression found in heart and placenta.

Its subcellular location is the nucleus. Functionally, acts as a sequence-specific transcriptional repressor in association with BCL6. May function in a narrow stage or be related to some events in the early B-cell development. This Homo sapiens (Human) protein is B-cell CLL/lymphoma 6 member B protein (BCL6B).